Here is a 265-residue protein sequence, read N- to C-terminus: 3-deoxy-manno-octulosonate cytidylyltransferase 2 (265 aa).

The protein belongs to the KdsB family.

The protein localises to the cytoplasm. It carries out the reaction 3-deoxy-alpha-D-manno-oct-2-ulosonate + CTP = CMP-3-deoxy-beta-D-manno-octulosonate + diphosphate. It functions in the pathway nucleotide-sugar biosynthesis; CMP-3-deoxy-D-manno-octulosonate biosynthesis; CMP-3-deoxy-D-manno-octulosonate from 3-deoxy-D-manno-octulosonate and CTP: step 1/1. The protein operates within bacterial outer membrane biogenesis; lipopolysaccharide biosynthesis. Its function is as follows. Activates KDO (a required 8-carbon sugar) for incorporation into bacterial lipopolysaccharide in Gram-negative bacteria. The polypeptide is 3-deoxy-manno-octulosonate cytidylyltransferase 2 (Burkholderia lata (strain ATCC 17760 / DSM 23089 / LMG 22485 / NCIMB 9086 / R18194 / 383)).